Here is a 368-residue protein sequence, read N- to C-terminus: ATP-dependent (S)-NAD(P)H-hydrate dehydratase (368 aa).

Residues 3–359 enclose the YjeF C-terminal domain; sequence SPSKKLLANV…DEVHGSFLDL (357 aa). (6S)-NADPHX is bound by residues G120 and 173 to 179; that span reads NVVEFAR. ATP-binding positions include 217-221 and 236-245; these read KGPHD and GGLKRSGGQG. D246 provides a ligand contact to (6S)-NADPHX.

Belongs to the NnrD/CARKD family. Mg(2+) serves as cofactor.

The protein resides in the cytoplasm. The enzyme catalyses (6S)-NADHX + ATP = ADP + phosphate + NADH + H(+). The catalysed reaction is (6S)-NADPHX + ATP = ADP + phosphate + NADPH + H(+). Its function is as follows. Catalyzes the dehydration of the S-form of NAD(P)HX at the expense of ATP, which is converted to ADP. Together with NAD(P)HX epimerase, which catalyzes the epimerization of the S- and R-forms, the enzyme allows the repair of both epimers of NAD(P)HX, a damaged form of NAD(P)H that is a result of enzymatic or heat-dependent hydration. This Ajellomyces capsulatus (strain G186AR / H82 / ATCC MYA-2454 / RMSCC 2432) (Darling's disease fungus) protein is ATP-dependent (S)-NAD(P)H-hydrate dehydratase.